The sequence spans 157 residues: 2-C-methyl-D-erythritol 2,4-cyclodiphosphate synthase (157 aa).

Residues aspartate 8 and histidine 10 each contribute to the a divalent metal cation site. Residues 8–10 (DVH) and 34–35 (HS) each bind 4-CDP-2-C-methyl-D-erythritol 2-phosphate. Histidine 42 lines the a divalent metal cation pocket. Residues 56–58 (DIG), 61–65 (FPDTD), 100–106 (AQKPKMA), 132–135 (TTTE), and phenylalanine 139 each bind 4-CDP-2-C-methyl-D-erythritol 2-phosphate.

It belongs to the IspF family. In terms of assembly, homotrimer. The cofactor is a divalent metal cation.

The catalysed reaction is 4-CDP-2-C-methyl-D-erythritol 2-phosphate = 2-C-methyl-D-erythritol 2,4-cyclic diphosphate + CMP. It participates in isoprenoid biosynthesis; isopentenyl diphosphate biosynthesis via DXP pathway; isopentenyl diphosphate from 1-deoxy-D-xylulose 5-phosphate: step 4/6. Involved in the biosynthesis of isopentenyl diphosphate (IPP) and dimethylallyl diphosphate (DMAPP), two major building blocks of isoprenoid compounds. Catalyzes the conversion of 4-diphosphocytidyl-2-C-methyl-D-erythritol 2-phosphate (CDP-ME2P) to 2-C-methyl-D-erythritol 2,4-cyclodiphosphate (ME-CPP) with a corresponding release of cytidine 5-monophosphate (CMP). This Alkaliphilus oremlandii (strain OhILAs) (Clostridium oremlandii (strain OhILAs)) protein is 2-C-methyl-D-erythritol 2,4-cyclodiphosphate synthase.